The chain runs to 107 residues: uncharacterized protein (107 aa).

Residues 1-32 (MDSLASGRWRRRRTEELPAAGDAKRACRRSEP) are disordered. Residues 22 to 31 (DAKRACRRSE) show a composition bias toward basic and acidic residues.

This is an uncharacterized protein from Mus musculus (Mouse).